The chain runs to 717 residues: HHIP-like protein 2 (717 aa).

The N-terminal stretch at Met-1–Gly-40 is a signal peptide. 4 disulfides stabilise this stretch: Cys-203/Cys-545, Cys-207/Cys-551, Cys-423/Cys-441, and Cys-508/Cys-607. Residues Ala-642–Pro-717 are disordered. The segment covering Ser-646–Gly-662 has biased composition (polar residues). Residue Asn-647 is glycosylated (N-linked (GlcNAc...) asparagine). The span at Ser-672 to Arg-687 shows a compositional bias: basic residues.

This sequence belongs to the HHIP family.

Its subcellular location is the secreted. In Mus musculus (Mouse), this protein is HHIP-like protein 2 (Hhipl2).